A 300-amino-acid polypeptide reads, in one-letter code: Probable membrane transporter protein YtnM (300 aa).

8 helical membrane passes run Leu-4–Ala-24, Leu-33–Val-53, Leu-76–Gly-96, Tyr-102–Tyr-122, Ile-139–Val-159, Leu-206–Val-226, Pro-231–Ile-251, and Val-260–Leu-280.

This sequence belongs to the 4-toluene sulfonate uptake permease (TSUP) (TC 2.A.102) family.

Its subcellular location is the cell membrane. The polypeptide is Probable membrane transporter protein YtnM (ytnM) (Bacillus subtilis (strain 168)).